Reading from the N-terminus, the 374-residue chain is Severin (374 aa).

Gelsolin-like repeat units lie at residues 58–109 (FTLE…DEYG), 180–220 (EGKT…KCSA), and 278–369 (EVIK…SFLK).

The protein belongs to the villin/gelsolin family.

In terms of biological role, severin blocks the ends of F-actin and causes the fragmentation and depolymerization of actin filaments. This severin binds stably with actin both in a Ca(2+) dependent and a Ca(2+) independent manner. The polypeptide is Severin (AG8) (Echinococcus granulosus (Hydatid tapeworm)).